The following is a 665-amino-acid chain: Syntabulin (665 aa).

A compositionally biased stretch (basic and acidic residues) spans 1–22; the sequence is MGPLRESKKEQRVQHQEKEISR. The segment at 1 to 271 is disordered; sequence MGPLRESKKE…GVKPPNPEQY (271 aa). Residues 2–421 are sufficient for interaction with KIF5B; it reads GPLRESKKEQ…DKLPDGLSLE (420 aa). The span at 35-52 shows a compositional bias: low complexity; the sequence is PQQQQQQQNKVSPASESP. Phosphoserine is present on serine 54. Low complexity predominate over residues 61–77; it reads FNPSSSGRSARTISSNS. The span at 85 to 101 shows a compositional bias: polar residues; sequence CPSSQSVSPVKTPSDTG. At serine 111 the chain carries Phosphoserine. Residues 141–162 are compositionally biased toward low complexity; the sequence is GGIIKPGSEADFSSSSSTGSIS. The segment covering 168-180 has biased composition (polar residues); sequence MSTTGNKRASFSR. Positions 225–245 are enriched in low complexity; sequence SYAPSSPSSSNSGSYKGSDCS. A coiled-coil region spans residues 275 to 357; it reads LQQKEVTVRH…MRSSLADKDK (83 aa). Positions 314-421 are sufficient for interaction with STX1A; the sequence is REDWIEEECH…DKLPDGLSLE (108 aa). Phosphoserine occurs at positions 400 and 557. The helical transmembrane segment at 609–629 threads the bilayer; the sequence is FLVDLLAVAAPVVPTVLWAFS.

In terms of assembly, interacts with STX1A and KIF5B.

Its subcellular location is the golgi apparatus membrane. Functionally, part of a kinesin motor-adapter complex that is critical for the anterograde axonal transport of active zone components and contributes to activity-dependent presynaptic assembly during neuronal development. In Mus musculus (Mouse), this protein is Syntabulin (Sybu).